Reading from the N-terminus, the 298-residue chain is Phosphatidylglycerol--prolipoprotein diacylglyceryl transferase (298 aa).

Helical transmembrane passes span 17 to 37 (LAVR…IVVG), 59 to 79 (MMFY…VLFY), and 97 to 117 (GGMS…LFAW). Arg142 serves as a coordination point for a 1,2-diacyl-sn-glycero-3-phospho-(1'-sn-glycerol). 2 helical membrane-spanning segments follow: residues 230 to 250 (MGAI…TVEF) and 257 to 277 (FLGL…PMIV).

It belongs to the Lgt family.

The protein localises to the cell inner membrane. The enzyme catalyses L-cysteinyl-[prolipoprotein] + a 1,2-diacyl-sn-glycero-3-phospho-(1'-sn-glycerol) = an S-1,2-diacyl-sn-glyceryl-L-cysteinyl-[prolipoprotein] + sn-glycerol 1-phosphate + H(+). It participates in protein modification; lipoprotein biosynthesis (diacylglyceryl transfer). Catalyzes the transfer of the diacylglyceryl group from phosphatidylglycerol to the sulfhydryl group of the N-terminal cysteine of a prolipoprotein, the first step in the formation of mature lipoproteins. This Burkholderia cenocepacia (strain ATCC BAA-245 / DSM 16553 / LMG 16656 / NCTC 13227 / J2315 / CF5610) (Burkholderia cepacia (strain J2315)) protein is Phosphatidylglycerol--prolipoprotein diacylglyceryl transferase.